The primary structure comprises 128 residues: KHDC1-like protein (128 aa).

This sequence belongs to the KHDC1 family.

The sequence is that of KHDC1-like protein (KHDC1L) from Homo sapiens (Human).